The chain runs to 327 residues: Arabinose 5-phosphate isomerase KpsF (327 aa).

The SIS domain maps to 48 to 191 (VLNLIMNCKG…AIAMIHQRKF (144 aa)). 63 to 68 (GMGKSG) serves as a coordination point for ATP. Residues 82–83 (GT), His89, His95, 121–130 (KLVPSLKNFG), and 155–157 (HMA) contribute to the substrate site. Zn(2+) is bound at residue His89. 2 CBS domains span residues 217-273 (MQHD…EGSL) and 282-327 (MTRE…RIFD).

Homotetramer.

The enzyme catalyses D-arabinose 5-phosphate = D-ribulose 5-phosphate. Its activity is regulated as follows. Inhibited by 10 uM zinc, cadmium or mercury ions. Involved in the biosynthesis of K-antigen capsules. Catalyzes the reversible aldol-ketol isomerization between D-ribulose 5-phosphate (Ru5P) and D-arabinose 5-phosphate (A5P). The sequence is that of Arabinose 5-phosphate isomerase KpsF from Escherichia coli O6:H1 (strain CFT073 / ATCC 700928 / UPEC).